The primary structure comprises 444 residues: Tol-Pal system protein TolB (444 aa).

A signal peptide spans 1 to 19; the sequence is MRNIIYFILSLLFSFASYA.

This sequence belongs to the TolB family. The Tol-Pal system is composed of five core proteins: the inner membrane proteins TolA, TolQ and TolR, the periplasmic protein TolB and the outer membrane protein Pal. They form a network linking the inner and outer membranes and the peptidoglycan layer.

The protein localises to the periplasm. Part of the Tol-Pal system, which plays a role in outer membrane invagination during cell division and is important for maintaining outer membrane integrity. In Rickettsia massiliae (strain Mtu5), this protein is Tol-Pal system protein TolB.